The following is an 819-amino-acid chain: MENPPLESEIKEDMSLKNHPPDKDKDKDTIMEQPSSPRHRKVVARWLPDEAQRPIINDAPVFTPSLEEFVDPLAYIEKIRPLAEPYGICRIIPPSTWKPPCRLKEKSIWEQTKFPTRIQTVDLLQNREPMKKKPKSRKRKRRRNSRMGSSKRRSGSSPAESTSSPEAEEKFGFNSGSDFTLDEFEKYALHFKDSYFEKKDSGGDIVKWTPSVDDIEGEYWRIVEQPTDEVEVYYGADLENGVLGSGFYKRAEKFTGSDMEQYTLSGWNLNNLPRLPGSVLSFEDCDISGVLVPWLYVGMCFSSFCWHVEDHHLYSLNYHHFGEPKVWYGVPGSNATALEKAMRKHLPDLFEEQPDLLHGLVTQFSPSILKDEGVQAYRVVQNSGEYVLTFPRAYHAGFNCGFNCAEAVNVAPVDWLAHGQNAVELYSKETRKTSLSHDKLLLGAAYEAVKALWELSASEGKENTTNLRWKSFCGKNGTLTNAIQARLQMEEGRITALGRDSSSLKKMEKDFDSNCERECFSCFYDLHLSASGCKCSPEEYACLKHADDLCSCDVKDGFILLRYTMDELSSLVRALEGESDDLKIWASKVLGIEHSDEDQTKTSSVISEEKKLKEGSFDLNIDLEMDYQEDVKEEASTSGGELTASENLGVSVEPINLGFLIFGKLWCNKYAIFPKGFRSRVKFYNVLDPTRMSNYISEVLDAGLMGPLFRVTLEESPDESFFNVSAQQCWEMVMRRVKDTSTSLGLPILPQFESINGLQMFGFLSPSIVQAIEALDPNHRLVEYWNHKNQTSSDSKDHFISSNCSASLTKGKLFGVDLM.

Residues 1-39 (MENPPLESEIKEDMSLKNHPPDKDKDKDTIMEQPSSPRH) form a disordered region. Residues 8 to 30 (SEIKEDMSLKNHPPDKDKDKDTI) are compositionally biased toward basic and acidic residues. Residues 59 to 100 (APVFTPSLEEFVDPLAYIEKIRPLAEPYGICRIIPPSTWKPP) enclose the JmjN domain. The interval 120-171 (TVDLLQNREPMKKKPKSRKRKRRRNSRMGSSKRRSGSSPAESTSSPEAEEKF) is disordered. The Nuclear localization signal motif lies at 130–137 (MKKKPKSR). A compositionally biased stretch (basic residues) spans 130–154 (MKKKPKSRKRKRRRNSRMGSSKRRS). A compositionally biased stretch (low complexity) spans 155–165 (GSSPAESTSSP). Residues 261–427 (QYTLSGWNLN…HGQNAVELYS (167 aa)) form the JmjC domain. 3 residues coordinate Fe cation: histidine 307, glutamate 309, and histidine 395. Zn(2+)-binding residues include cysteine 519, cysteine 522, cysteine 533, cysteine 535, cysteine 542, histidine 545, cysteine 550, and cysteine 552. A C5HC2 zinc finger spans residues 519–571 (CFSCFYDLHLSASGCKCSPEEYACLKHADDLCSCDVKDGFILLRYTMDELSSL). The FYR N-terminal domain occupies 644–702 (ASENLGVSVEPINLGFLIFGKLWCNKYAIFPKGFRSRVKFYNVLDPTRMSNYISEVLDA). The FYR C-terminal domain maps to 704–788 (LMGPLFRVTL…HRLVEYWNHK (85 aa)).

This sequence belongs to the JARID1 histone demethylase family. Fe(2+) serves as cofactor. Expressed in vascular tissues of roots, cotyledons, leaves and flowers. Expressed predominantly in phloem companion cells of roots. Present in inflorescences, roots, siliques, leaves and stems.

Its subcellular location is the nucleus. It catalyses the reaction N(6),N(6),N(6)-trimethyl-L-lysyl(4)-[histone H3] + 2-oxoglutarate + O2 = N(6),N(6)-dimethyl-L-lysyl(4)-[histone H3] + formaldehyde + succinate + CO2. The enzyme catalyses N(6),N(6)-dimethyl-L-lysyl(4)-[histone H3] + 2-oxoglutarate + O2 = N(6)-methyl-L-lysyl(4)-[histone H3] + formaldehyde + succinate + CO2. Its function is as follows. Histone demethylase that demethylates 'Lys-4' (H3K4me) of histone H3 with a specific activity for H3K4me3 and H3K4me2. No activity on H3K9me3/2, H3K27me3/2 and H3K36me3/2. Involved in the control of flowering time by demethylating H3K4me3 at the FLC locus and repressing its expression. The repression of FLC level and reduction in H3K4me3 at the FLC locus results in induction of the flowering activator FT, which is a downstream target of FLC. The polypeptide is Lysine-specific demethylase JMJ18 (Arabidopsis thaliana (Mouse-ear cress)).